A 466-amino-acid chain; its full sequence is E3 SUMO-protein ligase TRIM60 (466 aa).

An RING-type zinc finger spans residues 15–56; that stretch reads CYICSDFMEDPVTSRCGHNFCFACLRLLWDDLQGNIFCPVCQ. The B box-type zinc finger occupies 91–132; sequence EEHTVCPKHDQPLVLFCVRDRDVLCTQCSLSVEHQGHYTCPI. Positions 96, 99, 118, and 124 each coordinate Zn(2+). The stretch at 171 to 223 forms a coiled coil; that stretch reads LREEAQYQKIEIRYEIGQIKLFLQSEYEAHLNESHMEELRSFSELNGYLETLL. One can recognise a B30.2/SPRY domain in the interval 272–462; sequence LSLPAQYSGL…LEILTHPTPD (191 aa).

The protein belongs to the TRIM/RBCC family.

Functionally, E3 SUMO-protein ligase that mediates SUMOylation of TAB2 leading to inhibition of NF-kappa-B and MAPK pathways by suppressing the TRAF6/TAB2/TAK1 complex. The chain is E3 SUMO-protein ligase TRIM60 (Trim60) from Mus musculus (Mouse).